Consider the following 226-residue polypeptide: Ribonuclease 3 (226 aa).

One can recognise an RNase III domain in the interval 6 to 128 (INRLQRKLGY…LIGGVFLDSD (123 aa)). Glu41 lines the Mg(2+) pocket. Residue Asp45 is part of the active site. Asp114 and Glu117 together coordinate Mg(2+). The active site involves Glu117. The DRBM domain occupies 155-225 (DPKTRLQEYL…AEQALKMLEL (71 aa)).

The protein belongs to the ribonuclease III family. Homodimer. The cofactor is Mg(2+).

The protein resides in the cytoplasm. It catalyses the reaction Endonucleolytic cleavage to 5'-phosphomonoester.. In terms of biological role, digests double-stranded RNA. Involved in the processing of primary rRNA transcript to yield the immediate precursors to the large and small rRNAs (23S and 16S). Processes some mRNAs, and tRNAs when they are encoded in the rRNA operon. Processes pre-crRNA and tracrRNA of type II CRISPR loci if present in the organism. The chain is Ribonuclease 3 from Enterobacter sp. (strain 638).